We begin with the raw amino-acid sequence, 376 residues long: Lipoprotein p33 (376 aa).

An N-terminal signal peptide occupies residues 1–30; the sequence is MKIKKIKLLKALALTGAFGIVATVPVIVSS. A lipid anchor (N-palmitoyl cysteine) is attached at cysteine 31. A lipid anchor (S-diacylglycerol cysteine) is attached at cysteine 31. Residues 33 to 59 are disordered; it reads STDNNGGTGDNNTGGGGSGTDQQQGTT. Over residues 38–51 the composition is skewed to gly residues; it reads GGTGDNNTGGGGSG.

Belongs to the p35 lipoprotein family.

It is found in the cell membrane. This Malacoplasma penetrans (strain HF-2) (Mycoplasma penetrans) protein is Lipoprotein p33.